The chain runs to 690 residues: Long-chain fatty acid transport protein 5 (690 aa).

The Cytoplasmic segment spans residues 1 to 30 (MGVRQQLALLLLLLLLLWGLGQPVWPVAVA). Helical transmembrane passes span 31–51 (LTLR…LAML) and 56–76 (LGPW…LTLL). Residues 77–690 (PARLPPGLRW…QAVCEGTWRL (614 aa)) lie on the Cytoplasmic side of the membrane. 292-303 (FIYTSGTTGLPK) contacts AMP. At S501 the chain carries Phosphoserine.

The protein belongs to the ATP-dependent AMP-binding enzyme family. Predominantly expressed in liver.

Its subcellular location is the endoplasmic reticulum membrane. It localises to the microsome. The protein localises to the cell membrane. The catalysed reaction is a fatty acid(in) = a fatty acid(out). It carries out the reaction cholate + ATP + CoA = choloyl-CoA + AMP + diphosphate. The enzyme catalyses chenodeoxycholate + ATP + CoA = chenodeoxycholoyl-CoA + AMP + diphosphate. It catalyses the reaction deoxycholate + ATP + CoA = deoxycholoyl-CoA + AMP + diphosphate. The catalysed reaction is lithocholate + ATP + CoA = lithocholoyl-CoA + AMP + diphosphate. It carries out the reaction (25R)-3alpha,7alpha,12alpha-trihydroxy-5beta-cholestan-26-oate + ATP + CoA = (25R)-3alpha,7alpha,12alpha-trihydroxy-5beta-cholestan-26-oyl-CoA + AMP + diphosphate. The enzyme catalyses a very long-chain fatty acid + ATP + CoA = a very long-chain fatty acyl-CoA + AMP + diphosphate. It catalyses the reaction tetracosanoate + ATP + CoA = tetracosanoyl-CoA + AMP + diphosphate. The catalysed reaction is hexacosanoate + ATP + CoA = hexacosanoyl-CoA + AMP + diphosphate. It carries out the reaction a long-chain fatty acid + ATP + CoA = a long-chain fatty acyl-CoA + AMP + diphosphate. The enzyme catalyses octadecanoate + ATP + CoA = octadecanoyl-CoA + AMP + diphosphate. It catalyses the reaction eicosanoate + ATP + CoA = eicosanoyl-CoA + AMP + diphosphate. 3-alpha,7-alpha,12-alpha-trihydroxy-5-beta-cholestanate (THCA) inhibits the activation of cholate. Functionally, may mediate the import of long-chain fatty acids (LCFA) by facilitating their transport across cell membranes. Also catalyzes the ATP-dependent formation of fatty acyl-CoA using LCFA and very-long-chain fatty acids (VLCFA) as substrates. Mainly functions as a bile acyl-CoA synthetase catalyzing the activation of bile acids via ATP-dependent formation of bile acid CoA thioesters which is necessary for their subsequent conjugation with glycine or taurine. Both primary bile acids (cholic acid and chenodeoxycholic acid) and secondary bile acids (deoxycholic acid and lithocholic acid) are the principal substrates. In vitro, activates 3-alpha,7-alpha,12-alpha-trihydroxy-5-beta-cholestanate ((25R)-3alpha,7alpha,12alpha-trihydroxy-5beta-cholestan-26-oate or THCA), the C27 precursor of cholic acid deriving from the de novo synthesis from cholesterol. Plays an important role in hepatic fatty acid uptake and bile acid reconjugation and recycling but not in de novo synthesis of bile acids. This is Long-chain fatty acid transport protein 5 (SLC27A5) from Homo sapiens (Human).